Here is a 552-residue protein sequence, read N- to C-terminus: Phosphoglucomutase (552 aa).

Ser143 serves as the catalytic Phosphoserine intermediate. Mg(2+) is bound by residues Ser143, Asp295, Asp297, and Asp299.

The protein belongs to the phosphohexose mutase family. The cofactor is Mg(2+).

The enzyme catalyses alpha-D-glucose 1-phosphate = alpha-D-glucose 6-phosphate. Its pathway is glycolipid metabolism; diglucosyl-diacylglycerol biosynthesis. Catalyzes the interconversion between glucose-6-phosphate and alpha-glucose-1-phosphate. This is the first step in the biosynthesis of diglucosyl-diacylglycerol (Glc2-DAG), i.e. the predominant glycolipid found in the S.aureus membrane, which is also used as a membrane anchor for lipoteichoic acid (LTA). In Staphylococcus aureus (strain MRSA252), this protein is Phosphoglucomutase (pgcA).